Reading from the N-terminus, the 557-residue chain is Glypican-4 (557 aa).

Positions 1-18 (MARLGLLALLCTLAALSA) are cleaved as a signal peptide. Position 357 is a phosphoserine (serine 357). 3 O-linked (Xyl...) (glycosaminoglycan) serine glycosylation sites follow: serine 494, serine 498, and serine 500. An N-linked (GlcNAc...) asparagine glycan is attached at asparagine 514. Serine 529 carries the GPI-anchor amidated serine lipid modification. The propeptide at 530–557 (AGGAHAEAKPYLLAALCILFLAVQGEWR) is removed in mature form.

The protein belongs to the glypican family. In terms of tissue distribution, highly expressed in developing brain and kidney.

The protein resides in the cell membrane. The protein localises to the secreted. It is found in the extracellular space. Cell surface proteoglycan that bears heparan sulfate. May be involved in the development of kidney tubules and of the central nervous system. This Mus musculus (Mouse) protein is Glypican-4 (Gpc4).